The primary structure comprises 261 residues: Pyridoxine-5'-phosphate oxidase (261 aa).

Residue 42 to 45 coordinates pyridoxal 5'-phosphate; the sequence is RGDR. 95-98 lines the FMN pocket; the sequence is RMLL. Residue lysine 100 coordinates pyridoxal 5'-phosphate. Residues 110 to 111, 116 to 117, and glutamine 139 each bind FMN; these read FT and RK. Pyridoxal 5'-phosphate is bound by residues tyrosine 157, arginine 161, and serine 165. FMN is bound by residues 174-175 and tryptophan 219; that span reads QS. 225-227 contributes to the pyridoxal 5'-phosphate binding site; sequence RLH. Arginine 229 contributes to the FMN binding site. Threonine 238 carries the phosphothreonine modification. Residue serine 241 is modified to Phosphoserine.

The protein belongs to the pyridoxamine 5'-phosphate oxidase family. Homodimer. Requires FMN as cofactor. In terms of tissue distribution, detected in adult liver.

It catalyses the reaction pyridoxamine 5'-phosphate + O2 + H2O = pyridoxal 5'-phosphate + H2O2 + NH4(+). The enzyme catalyses pyridoxine 5'-phosphate + O2 = pyridoxal 5'-phosphate + H2O2. It participates in cofactor metabolism; pyridoxal 5'-phosphate salvage; pyridoxal 5'-phosphate from pyridoxamine 5'-phosphate: step 1/1. Its pathway is cofactor metabolism; pyridoxal 5'-phosphate salvage; pyridoxal 5'-phosphate from pyridoxine 5'-phosphate: step 1/1. Functionally, catalyzes the oxidation of either pyridoxine 5'-phosphate (PNP) or pyridoxamine 5'-phosphate (PMP) into pyridoxal 5'-phosphate (PLP). The polypeptide is Pyridoxine-5'-phosphate oxidase (Pnpo) (Rattus norvegicus (Rat)).